The following is a 238-amino-acid chain: Enolase-phosphatase E1 (238 aa).

Belongs to the HAD-like hydrolase superfamily. MasA/MtnC family. Monomer. Requires Mg(2+) as cofactor.

The enzyme catalyses 5-methylsulfanyl-2,3-dioxopentyl phosphate + H2O = 1,2-dihydroxy-5-(methylsulfanyl)pent-1-en-3-one + phosphate. It participates in amino-acid biosynthesis; L-methionine biosynthesis via salvage pathway; L-methionine from S-methyl-5-thio-alpha-D-ribose 1-phosphate: step 3/6. It functions in the pathway amino-acid biosynthesis; L-methionine biosynthesis via salvage pathway; L-methionine from S-methyl-5-thio-alpha-D-ribose 1-phosphate: step 4/6. In terms of biological role, bifunctional enzyme that catalyzes the enolization of 2,3-diketo-5-methylthiopentyl-1-phosphate (DK-MTP-1-P) into the intermediate 2-hydroxy-3-keto-5-methylthiopentenyl-1-phosphate (HK-MTPenyl-1-P), which is then dephosphorylated to form the acireductone 1,2-dihydroxy-3-keto-5-methylthiopentene (DHK-MTPene). The chain is Enolase-phosphatase E1 from Synechococcus elongatus (strain ATCC 33912 / PCC 7942 / FACHB-805) (Anacystis nidulans R2).